We begin with the raw amino-acid sequence, 118 residues long: Large ribosomal subunit protein bL20 (118 aa).

This sequence belongs to the bacterial ribosomal protein bL20 family.

Its function is as follows. Binds directly to 23S ribosomal RNA and is necessary for the in vitro assembly process of the 50S ribosomal subunit. It is not involved in the protein synthesizing functions of that subunit. The protein is Large ribosomal subunit protein bL20 of Serratia proteamaculans (strain 568).